The following is a 233-amino-acid chain: Phosphoglycolate phosphatase (233 aa).

Asp13 (nucleophile) is an active-site residue. Mg(2+) is bound by residues Asp13, Asp15, and Asp175.

This sequence belongs to the HAD-like hydrolase superfamily. CbbY/CbbZ/Gph/YieH family. The cofactor is Mg(2+).

It carries out the reaction 2-phosphoglycolate + H2O = glycolate + phosphate. It functions in the pathway organic acid metabolism; glycolate biosynthesis; glycolate from 2-phosphoglycolate: step 1/1. Specifically catalyzes the dephosphorylation of 2-phosphoglycolate. Is involved in the dissimilation of the intracellular 2-phosphoglycolate formed during the DNA repair of 3'-phosphoglycolate ends, a major class of DNA lesions induced by oxidative stress. The protein is Phosphoglycolate phosphatase of Agrobacterium fabrum (strain C58 / ATCC 33970) (Agrobacterium tumefaciens (strain C58)).